The following is a 48-amino-acid chain: MRLFLIFTFIVASLASVYGCIPAANPCRGNAKCCGNYVCKNGRCLPRS.

The first 19 residues, 1-19 (MRLFLIFTFIVASLASVYG), serve as a signal peptide directing secretion. Disulfide bonds link C20-C34, C27-C39, and C33-C44.

Belongs to the venom Ptu1-like knottin family. Expressed by the venom gland.

The protein resides in the secreted. Binds reversibly and blocks P/Q-type voltage-gated calcium channels (Cav). This Platymeris rhadamanthus (Red spot assassin bug) protein is U-reduvitoxin-Pr5a.